The sequence spans 94 residues: Phosphoribosyl-ATP pyrophosphatase (94 aa).

Belongs to the PRA-PH family.

Its subcellular location is the cytoplasm. The enzyme catalyses 1-(5-phospho-beta-D-ribosyl)-ATP + H2O = 1-(5-phospho-beta-D-ribosyl)-5'-AMP + diphosphate + H(+). It participates in amino-acid biosynthesis; L-histidine biosynthesis; L-histidine from 5-phospho-alpha-D-ribose 1-diphosphate: step 2/9. In Saccharolobus solfataricus (strain ATCC 35092 / DSM 1617 / JCM 11322 / P2) (Sulfolobus solfataricus), this protein is Phosphoribosyl-ATP pyrophosphatase (hisE).